Here is a 188-residue protein sequence, read N- to C-terminus: Cytochrome b-245 chaperone 1 homolog (188 aa).

The helical transmembrane segment at 20-42 (SIRSWSLLVGILSVGLAAAYYST) threads the bilayer.

The protein belongs to the CYBC1 family.

The protein localises to the endoplasmic reticulum membrane. Functions as a chaperone necessary for a stable expression of the CYBA and CYBB subunits of the cytochrome b-245 heterodimer. The protein is Cytochrome b-245 chaperone 1 homolog (cybc1) of Xenopus laevis (African clawed frog).